The chain runs to 742 residues: Phosphoribosylformylglycinamidine synthase subunit PurL (742 aa).

The active site involves His54. ATP is bound by residues Tyr57 and Lys96. Position 98 (Glu98) interacts with Mg(2+). Residues Ser99 to His102 and Arg121 each bind substrate. His100 functions as the Proton acceptor in the catalytic mechanism. Asp122 serves as a coordination point for Mg(2+). Gln245 is a binding site for substrate. Asp273 is a binding site for Mg(2+). Position 317-319 (Glu317–Gln319) interacts with substrate. Asp500 and Gly537 together coordinate ATP. Position 538 (Asn538) interacts with Mg(2+). Position 540 (Ser540) interacts with substrate.

Belongs to the FGAMS family. Monomer. Part of the FGAM synthase complex composed of 1 PurL, 1 PurQ and 2 PurS subunits.

It localises to the cytoplasm. It catalyses the reaction N(2)-formyl-N(1)-(5-phospho-beta-D-ribosyl)glycinamide + L-glutamine + ATP + H2O = 2-formamido-N(1)-(5-O-phospho-beta-D-ribosyl)acetamidine + L-glutamate + ADP + phosphate + H(+). The protein operates within purine metabolism; IMP biosynthesis via de novo pathway; 5-amino-1-(5-phospho-D-ribosyl)imidazole from N(2)-formyl-N(1)-(5-phospho-D-ribosyl)glycinamide: step 1/2. In terms of biological role, part of the phosphoribosylformylglycinamidine synthase complex involved in the purines biosynthetic pathway. Catalyzes the ATP-dependent conversion of formylglycinamide ribonucleotide (FGAR) and glutamine to yield formylglycinamidine ribonucleotide (FGAM) and glutamate. The FGAM synthase complex is composed of three subunits. PurQ produces an ammonia molecule by converting glutamine to glutamate. PurL transfers the ammonia molecule to FGAR to form FGAM in an ATP-dependent manner. PurS interacts with PurQ and PurL and is thought to assist in the transfer of the ammonia molecule from PurQ to PurL. In Bacillus velezensis (strain DSM 23117 / BGSC 10A6 / LMG 26770 / FZB42) (Bacillus amyloliquefaciens subsp. plantarum), this protein is Phosphoribosylformylglycinamidine synthase subunit PurL.